Reading from the N-terminus, the 328-residue chain is Eukaryotic translation initiation factor 3 subunit I (328 aa).

5 WD repeats span residues 8–49, 50–89, 146–185, 191–230, and 288–327; these read GHER…GTYR, GHNG…ELFT, DGKK…LLKQ, GHKK…LLKT, and GHFG…FNIK.

This sequence belongs to the eIF-3 subunit I family. Component of the eukaryotic translation initiation factor 3 (eIF-3) complex.

It localises to the cytoplasm. Its function is as follows. Component of the eukaryotic translation initiation factor 3 (eIF-3) complex, which is involved in protein synthesis of a specialized repertoire of mRNAs and, together with other initiation factors, stimulates binding of mRNA and methionyl-tRNAi to the 40S ribosome. The eIF-3 complex specifically targets and initiates translation of a subset of mRNAs involved in cell proliferation. The sequence is that of Eukaryotic translation initiation factor 3 subunit I (TIF3I1) from Arabidopsis thaliana (Mouse-ear cress).